Here is a 493-residue protein sequence, read N- to C-terminus: Glutamate--tRNA ligase (493 aa).

A 'HIGH' region motif is present at residues 10–20 (PSPTGDPHVGT). The 'KMSKS' region motif lies at 251–255 (KLSKR). ATP is bound at residue Lys254.

It belongs to the class-I aminoacyl-tRNA synthetase family. Glutamate--tRNA ligase type 1 subfamily. In terms of assembly, monomer.

The protein localises to the cytoplasm. It carries out the reaction tRNA(Glu) + L-glutamate + ATP = L-glutamyl-tRNA(Glu) + AMP + diphosphate. In terms of biological role, catalyzes the attachment of glutamate to tRNA(Glu) in a two-step reaction: glutamate is first activated by ATP to form Glu-AMP and then transferred to the acceptor end of tRNA(Glu). The sequence is that of Glutamate--tRNA ligase from Pseudomonas entomophila (strain L48).